The primary structure comprises 487 residues: Adenylosuccinate synthetase, chloroplastic (487 aa).

The transit peptide at 1 to 46 (MSLSTVNHAAAAAAAAGSGKSFSAAAPAAPSVRLPRTRAPAAAAVS) directs the protein to the chloroplast. GTP contacts are provided by residues 74-80 (GDEGKGK) and 102-104 (GHT). The Proton acceptor role is filled by D75. Residues D75 and G102 each coordinate Mg(2+). Residues 75–78 (DEGK), 100–103 (NAGH), T192, R206, Q286, T301, and R365 contribute to the IMP site. Residue H103 is the Proton donor of the active site. 361–367 (TTTGRPR) is a binding site for substrate. Residues R367, 393–395 (KLD), and 476–478 (GVG) contribute to the GTP site.

This sequence belongs to the adenylosuccinate synthetase family. In terms of assembly, homodimer. The cofactor is Mg(2+).

The protein resides in the plastid. Its subcellular location is the chloroplast. It catalyses the reaction IMP + L-aspartate + GTP = N(6)-(1,2-dicarboxyethyl)-AMP + GDP + phosphate + 2 H(+). It participates in purine metabolism; AMP biosynthesis via de novo pathway; AMP from IMP: step 1/2. Functionally, plays an important role in the de novo pathway and in the salvage pathway of purine nucleotide biosynthesis. Catalyzes the first committed step in the biosynthesis of AMP from IMP. This is Adenylosuccinate synthetase, chloroplastic from Oryza sativa subsp. indica (Rice).